A 255-amino-acid chain; its full sequence is tRNA (guanine-N(1)-)-methyltransferase (255 aa).

S-adenosyl-L-methionine contacts are provided by residues glycine 119 and 139–144 (IGDFIL).

It belongs to the RNA methyltransferase TrmD family. As to quaternary structure, homodimer.

The protein resides in the cytoplasm. The enzyme catalyses guanosine(37) in tRNA + S-adenosyl-L-methionine = N(1)-methylguanosine(37) in tRNA + S-adenosyl-L-homocysteine + H(+). In terms of biological role, specifically methylates guanosine-37 in various tRNAs. The chain is tRNA (guanine-N(1)-)-methyltransferase from Pseudoalteromonas translucida (strain TAC 125).